The following is a 384-amino-acid chain: Dual specificity protein phosphatase 5 (384 aa).

The Rhodanese domain maps to 19–141 (AEARCVVLDC…FYSQYPECCV (123 aa)). The Nuclear localization signal signature appears at 53-74 (RRARGGAVSARYVLADEAARAR). Positions 178-319 (GPVEILPFLY…LLQYESEILP (142 aa)) constitute a Tyrosine-protein phosphatase domain. The active-site Phosphocysteine intermediate is C263.

This sequence belongs to the protein-tyrosine phosphatase family. Non-receptor class dual specificity subfamily.

The protein resides in the nucleus. The enzyme catalyses O-phospho-L-tyrosyl-[protein] + H2O = L-tyrosyl-[protein] + phosphate. It catalyses the reaction O-phospho-L-seryl-[protein] + H2O = L-seryl-[protein] + phosphate. The catalysed reaction is O-phospho-L-threonyl-[protein] + H2O = L-threonyl-[protein] + phosphate. Its function is as follows. Dual specificity protein phosphatase; active with phosphotyrosine, phosphoserine and phosphothreonine residues. The highest relative activity is toward ERK1. The sequence is that of Dual specificity protein phosphatase 5 (Dusp5) from Rattus norvegicus (Rat).